Here is a 2283-residue protein sequence, read N- to C-terminus: DNA polymerase epsilon catalytic subunit A (2283 aa).

Positions 1 to 32 are disordered; that stretch reads MVLRNSGRRHPEPGADGEGSRDDGPSSSVSAL. Residues 9–24 show a composition bias toward basic and acidic residues; sequence RHPEPGADGEGSRDDG. Residues serine 1184, serine 1296, and serine 1316 each carry the phosphoserine modification. 2 disordered regions span residues 1935–1968 and 2014–2041; these read GQVK…GESE and HSAP…TGSL. Residues 1936–1946 are compositionally biased toward basic and acidic residues; sequence QVKEQDSQARE. The segment covering 1947 to 1968 has biased composition (acidic residues); sequence ETDEEEEDKEKDEEEEGMGESE. Positions 2028 to 2037 are enriched in polar residues; sequence SQFSQESEGA. Residues cysteine 2155, cysteine 2158, cysteine 2184, and cysteine 2187 each coordinate Zn(2+). The segment at 2155-2187 adopts a CysA-type zinc-finger fold; that stretch reads CHSCNFCRDLDLCKDSSFSQDGAILPQWLCSNC. The [4Fe-4S] cluster site is built by cysteine 2218, cysteine 2221, cysteine 2233, and cysteine 2235. Residues 2218–2235 carry the CysB motif motif; that stretch reads CLKCRGMKETHMPVYCSC.

The protein belongs to the DNA polymerase type-B family. In terms of assembly, component of the DNA polymerase epsilon complex consisting of four subunits: the catalytic subunit POLE and the accessory subunits POLE2, POLE3 and POLE4. Interacts with RAD17 and TOPBP1. [4Fe-4S] cluster serves as cofactor.

It is found in the nucleus. The enzyme catalyses DNA(n) + a 2'-deoxyribonucleoside 5'-triphosphate = DNA(n+1) + diphosphate. Catalytic component of the DNA polymerase epsilon complex. Participates in chromosomal DNA replication. Required during synthesis of the leading DNA strands at the replication fork and binds at/or near replication origins and moves along DNA with the replication fork. Has 3'-5' proofreading exonuclease activity that corrects errors arising during DNA replication. It is also involved in DNA synthesis during DNA repair. In Mus musculus (Mouse), this protein is DNA polymerase epsilon catalytic subunit A (Pole).